Consider the following 87-residue polypeptide: Protein anon-73B1 (87 aa).

Residues 25–47 (LLIRYGLYVGALFQFVCISAAVL) form a helical membrane-spanning segment. The disordered stretch occupies residues 50 to 87 (NNPDSQSNPETGEVTEREGEPVRTRLHKIRKLEKKKRR). The span at 63–72 (VTEREGEPVR) shows a compositional bias: basic and acidic residues. Over residues 73–87 (TRLHKIRKLEKKKRR) the composition is skewed to basic residues.

It belongs to the UPF0239 family.

Its subcellular location is the membrane. The sequence is that of Protein anon-73B1 (anon-73B1) from Drosophila simulans (Fruit fly).